Consider the following 327-residue polypeptide: GTPase Obg (327 aa).

One can recognise an Obg domain in the interval 1-159 (MKFLDQVKIY…YVIWLQLKTI (159 aa)). Residues 160–327 (ADVGIVGLPN…IKAKLLSYVS (168 aa)) form the OBG-type G domain. GTP is bound by residues 166-173 (GLPNAGKS), 191-195 (FTTLN), 212-215 (DIPG), 279-282 (NKTD), and 308-310 (STL). Residues serine 173 and threonine 193 each contribute to the Mg(2+) site.

This sequence belongs to the TRAFAC class OBG-HflX-like GTPase superfamily. OBG GTPase family. In terms of assembly, monomer. Mg(2+) serves as cofactor.

The protein localises to the cytoplasm. An essential GTPase which binds GTP, GDP and possibly (p)ppGpp with moderate affinity, with high nucleotide exchange rates and a fairly low GTP hydrolysis rate. Plays a role in control of the cell cycle, stress response, ribosome biogenesis and in those bacteria that undergo differentiation, in morphogenesis control. The polypeptide is GTPase Obg (Pelagibacter ubique (strain HTCC1062)).